A 395-amino-acid chain; its full sequence is Formate-dependent phosphoribosylglycinamide formyltransferase (395 aa).

Residues 22–23 and glutamate 82 each bind N(1)-(5-phospho-beta-D-ribosyl)glycinamide; that span reads EL. ATP is bound by residues arginine 115, lysine 156, 161–166, 196–199, and glutamate 204; these read SSGKGQ and EGFI. One can recognise an ATP-grasp domain in the interval 120-309; it reads RLAAETLGLP…EFALHARAIL (190 aa). Residues glutamate 268 and glutamate 280 each coordinate Mg(2+). Residues aspartate 287, lysine 356, and 363 to 364 each bind N(1)-(5-phospho-beta-D-ribosyl)glycinamide; that span reads RR.

Belongs to the PurK/PurT family. As to quaternary structure, homodimer.

It carries out the reaction N(1)-(5-phospho-beta-D-ribosyl)glycinamide + formate + ATP = N(2)-formyl-N(1)-(5-phospho-beta-D-ribosyl)glycinamide + ADP + phosphate + H(+). The protein operates within purine metabolism; IMP biosynthesis via de novo pathway; N(2)-formyl-N(1)-(5-phospho-D-ribosyl)glycinamide from N(1)-(5-phospho-D-ribosyl)glycinamide (formate route): step 1/1. Functionally, involved in the de novo purine biosynthesis. Catalyzes the transfer of formate to 5-phospho-ribosyl-glycinamide (GAR), producing 5-phospho-ribosyl-N-formylglycinamide (FGAR). Formate is provided by PurU via hydrolysis of 10-formyl-tetrahydrofolate. The sequence is that of Formate-dependent phosphoribosylglycinamide formyltransferase from Stenotrophomonas maltophilia (strain K279a).